Consider the following 97-residue polypeptide: Class II hydrophobin NC2 (97 aa).

Positions 1 to 17 (MQFTIATVLSLLTITLA) are cleaved as a signal peptide. 4 disulfides stabilise this stretch: Cys-31–Cys-79, Cys-40–Cys-70, Cys-41–Cys-53, and Cys-80–Cys-91. A glycan (N-linked (GlcNAc...) asparagine) is linked at Asn-62.

Belongs to the cerato-ulmin hydrophobin family. As to quaternary structure, homotrimer. Further self-assembles to form highly ordered films at water-air interfaces through intermolecular interactions.

Its subcellular location is the secreted. The protein localises to the cell wall. Functionally, aerial growth, conidiation, and dispersal of filamentous fungi in the environment rely upon a capability of their secreting small amphipathic proteins called hydrophobins (HPBs) with low sequence identity. Class I can self-assemble into an outermost layer of rodlet bundles on aerial cell surfaces, conferring cellular hydrophobicity that supports fungal growth, development and dispersal; whereas Class II form highly ordered films at water-air interfaces through intermolecular interactions but contribute nothing to the rodlet structure. NC2 is a class II hydrophobin that has the potential to adsorb to the hydrophobic interface at the hydrophobic-hydrophilic interface at very high rate but the predicted self-assembly NC2 film possesses a lower flexural rigidity than other class II hydrophobins such as HFBII from Hypocrea jecorina (also known as Trichoderma reesei). This Neurospora crassa (strain ATCC 24698 / 74-OR23-1A / CBS 708.71 / DSM 1257 / FGSC 987) protein is Class II hydrophobin NC2.